Consider the following 188-residue polypeptide: Pyridoxal 5'-phosphate synthase subunit PdxT (188 aa).

46-48 (GES) is an L-glutamine binding site. Cysteine 78 serves as the catalytic Nucleophile. L-glutamine contacts are provided by residues arginine 105 and 134–135 (IR). Active-site charge relay system residues include histidine 170 and glutamate 172.

Belongs to the glutaminase PdxT/SNO family. In the presence of PdxS, forms a dodecamer of heterodimers. Only shows activity in the heterodimer.

The catalysed reaction is aldehydo-D-ribose 5-phosphate + D-glyceraldehyde 3-phosphate + L-glutamine = pyridoxal 5'-phosphate + L-glutamate + phosphate + 3 H2O + H(+). It carries out the reaction L-glutamine + H2O = L-glutamate + NH4(+). Its pathway is cofactor biosynthesis; pyridoxal 5'-phosphate biosynthesis. In terms of biological role, catalyzes the hydrolysis of glutamine to glutamate and ammonia as part of the biosynthesis of pyridoxal 5'-phosphate. The resulting ammonia molecule is channeled to the active site of PdxS. The protein is Pyridoxal 5'-phosphate synthase subunit PdxT of Desulforamulus reducens (strain ATCC BAA-1160 / DSM 100696 / MI-1) (Desulfotomaculum reducens).